A 54-amino-acid chain; its full sequence is Ovomucoid (54 aa).

Residues Val-4–Cys-54 enclose the Kazal-like domain. Disulfide bonds link Cys-6–Cys-36, Cys-14–Cys-33, and Cys-22–Cys-54. An N-linked (GlcNAc...) asparagine glycan is attached at Asn-43.

It localises to the secreted. This chain is Ovomucoid, found in Cereopsis novaehollandiae (Cape Barren goose).